The primary structure comprises 231 residues: Flagellar L-ring protein (231 aa).

An N-terminal signal peptide occupies residues 1-18 (MKHLLSVFALGGAVLLAG). Residue C19 is the site of N-palmitoyl cysteine attachment. C19 is lipidated: S-diacylglycerol cysteine.

The protein belongs to the FlgH family. The basal body constitutes a major portion of the flagellar organelle and consists of four rings (L,P,S, and M) mounted on a central rod.

The protein localises to the cell outer membrane. The protein resides in the bacterial flagellum basal body. In terms of biological role, assembles around the rod to form the L-ring and probably protects the motor/basal body from shearing forces during rotation. The sequence is that of Flagellar L-ring protein from Pseudomonas entomophila (strain L48).